The following is a 120-amino-acid chain: NAD(P)H-quinone oxidoreductase subunit 3, chloroplastic (120 aa).

3 helical membrane passes run I9 to G29, M64 to M84, and V88 to L108.

The protein belongs to the complex I subunit 3 family. NDH is composed of at least 16 different subunits, 5 of which are encoded in the nucleus.

It localises to the plastid. The protein localises to the chloroplast thylakoid membrane. It catalyses the reaction a plastoquinone + NADH + (n+1) H(+)(in) = a plastoquinol + NAD(+) + n H(+)(out). It carries out the reaction a plastoquinone + NADPH + (n+1) H(+)(in) = a plastoquinol + NADP(+) + n H(+)(out). NDH shuttles electrons from NAD(P)H:plastoquinone, via FMN and iron-sulfur (Fe-S) centers, to quinones in the photosynthetic chain and possibly in a chloroplast respiratory chain. The immediate electron acceptor for the enzyme in this species is believed to be plastoquinone. Couples the redox reaction to proton translocation, and thus conserves the redox energy in a proton gradient. This chain is NAD(P)H-quinone oxidoreductase subunit 3, chloroplastic, found in Olimarabidopsis pumila (Dwarf rocket).